The following is a 345-amino-acid chain: Anthranilate phosphoribosyltransferase (345 aa).

5-phospho-alpha-D-ribose 1-diphosphate-binding positions include Gly-84, 87–88 (GD), Thr-92, 94–97 (NIST), 112–120 (KHGNRSVSS), and Ser-124. Residue Gly-84 coordinates anthranilate. A Mg(2+)-binding site is contributed by Ser-96. Asn-115 contacts anthranilate. Arg-170 provides a ligand contact to anthranilate. Mg(2+) is bound by residues Asp-229 and Glu-230.

It belongs to the anthranilate phosphoribosyltransferase family. Homodimer. Mg(2+) serves as cofactor.

The catalysed reaction is N-(5-phospho-beta-D-ribosyl)anthranilate + diphosphate = 5-phospho-alpha-D-ribose 1-diphosphate + anthranilate. The protein operates within amino-acid biosynthesis; L-tryptophan biosynthesis; L-tryptophan from chorismate: step 2/5. Functionally, catalyzes the transfer of the phosphoribosyl group of 5-phosphorylribose-1-pyrophosphate (PRPP) to anthranilate to yield N-(5'-phosphoribosyl)-anthranilate (PRA). The polypeptide is Anthranilate phosphoribosyltransferase (Xanthomonas campestris pv. campestris (strain B100)).